Consider the following 108-residue polypeptide: Thioredoxin (108 aa).

Positions 2–108 (GKYFEATDKN…IAKKIDEHIG (107 aa)) constitute a Thioredoxin domain. An intrachain disulfide couples cysteine 32 to cysteine 35.

It belongs to the thioredoxin family.

Functionally, participates in various redox reactions through the reversible oxidation of its active center dithiol to a disulfide and catalyzes dithiol-disulfide exchange reactions. The polypeptide is Thioredoxin (trxA) (Chlorobaculum thiosulfatiphilum (Chlorobium limicola f.sp. thiosulfatophilum)).